A 120-amino-acid chain; its full sequence is Secreted RxLR effector protein RXLR-C26 (120 aa).

A signal peptide spans 1–29 (MTGILCFPPFARFFMLLSGCAWLAGVSSG). The RxLR-dEER motif lies at 57–77 (RNLRGHINSAIIEANDTSEER). Asn-71 carries N-linked (GlcNAc...) asparagine glycosylation.

It belongs to the RxLR effector family.

It is found in the secreted. Its subcellular location is the host cytoplasm. It localises to the host nucleus. In terms of biological role, secreted effector that does not suppress pattern-triggered immunity (PTI) in plant host. This chain is Secreted RxLR effector protein RXLR-C26, found in Plasmopara halstedii (Downy mildew of sunflower).